A 968-amino-acid chain; its full sequence is Polycystin-2 (968 aa).

Polar residues predominate over residues 1 to 11 (MVNSSRVQPQQ). 2 disordered regions span residues 1–28 (MVNS…DPGR) and 58–181 (RIRQ…LPLE). The Cytoplasmic portion of the chain corresponds to 1–219 (MVNSSRVQPQ…STNREKYLKS (219 aa)). Low complexity predominate over residues 62 to 83 (AAARDPPAGAAASPSPPLSSCS). Ser-76 and Ser-80 each carry phosphoserine. Over residues 95-107 (EAEEEEEEVEGEE) the composition is skewed to acidic residues. Positions 123 to 139 (RRSAASSAVSSVGARSR) are enriched in low complexity. Arg-137 carries the post-translational modification Omega-N-methylarginine. The chain crosses the membrane as a helical span at residues 220–241 (VLRELVTYLLFLIVLCILTYGM). Residues 242–468 (MSSNVYYYTR…PLKLIRYVTT (227 aa)) lie on the Extracellular side of the membrane. N-linked (GlcNAc...) asparagine glycans are attached at residues Asn-299 and Asn-305. Residue Asn-328 is glycosylated (N-linked (GlcNAc...) (complex) asparagine). Residues Cys-331 and Cys-344 are joined by a disulfide bond. N-linked (GlcNAc...) asparagine glycans are attached at residues Asn-362 and Asn-375. A helical membrane pass occupies residues 469–489 (FDFFLAACEIIFCFFIFYYVV). Residues 490 to 505 (EEILEIRIHKLHYFRS) are Cytoplasmic-facing. Residues 506-526 (FWNCLDVVIVVLSVVAIGINI) form a helical membrane-spanning segment. Residues 527–552 (YRTSNVEVLLQFLEDQNTFPNFEHLA) lie on the Extracellular side of the membrane. A helical membrane pass occupies residues 553-573 (YWQIQFNNIAAVTVFFVWIKL). Gln-557 lines the cholesterol pocket. Residues 574–597 (FKFINFNRTMSQLSTTMSRCAKDL) lie on the Cytoplasmic side of the membrane. A helical transmembrane segment spans residues 598 to 619 (FGFAIMFFIIFLAYAQLAYLVF). At 620-631 (GTQVDDFSTFQE) the chain is on the extracellular side. Positions 632–646 (CIFTQFRIILGDINF) form an intramembrane region, pore-forming. Leu-641 serves as a coordination point for Ca(2+). The Selectivity filter signature appears at 641–643 (LGD). At 647 to 654 (AEIEEANR) the chain is on the extracellular side. The chain crosses the membrane as a helical span at residues 655–675 (VLGPIYFTTFVFFMFFILLNM). Residues 676–968 (FLAIINDTYS…GGNGSSNVHV (293 aa)) are Cytoplasmic-facing. Residues 750–785 (HTDAEIEAIFTKYDQDGDQELTEHEHQQMRDDLEKE) enclose the EF-hand domain. Positions 763, 765, 767, 769, and 774 each coordinate Ca(2+). Residues 764–831 (QDGDQELTEH…HSSRRRGSIS (68 aa)) form a disordered region. Over residues 770–795 (LTEHEHQQMRDDLEKEREDLDLDHSS) the composition is skewed to basic and acidic residues. Over residues 796–807 (LPRPMSSRSFPR) the composition is skewed to low complexity. Residues Ser-801, Ser-808, Ser-812, and Ser-829 each carry the phosphoserine modification. A linker region spans residues 803–822 (RSFPRSLDDSEEDDDEDSGH). Residues 810–821 (DDSEEDDDEDSG) are important for interaction with PACS1 and PACS2. Residues 833 to 872 (GVSYEEFQVLVRRVDRMEHSIGSIVSKIDAVIVKLEIMER) are a coiled coil. The segment at 917–968 (ESDDAASQISHGLGTPVGLNGQPRPRSSRPSSSQSTEGMEGAGGNGSSNVHV) is disordered. Residues 938–951 (QPRPRSSRPSSSQS) are compositionally biased toward low complexity.

This sequence belongs to the polycystin family. As to quaternary structure, homotetramer. Component of the heterotetrameric polycystin channel complex with PKD1; the tetramer contains one PKD1 chain and three PKD2 chains. Isoform 1 interacts with PKD1 while isoform 3 does not. Interacts with PKD1L1; probably forms a Ca(2+) channel. Interacts with CD2AP. Interacts with HAX1. Interacts with NEK8. Part of a complex containing AKAP5, ADCY5, ADCY6 and PDE4C. Interacts (via C-terminus) with TRPV4 (via C-terminus). Interacts (via C-terminal acidic region) with PACS1 and PACS2; these interactions retain the protein in the endoplasmic reticulum and prevent trafficking to the cell membrane. Interacts with TMEM33. Form a heterotetramer with TRPC1 with a 2:2 stoichiometry; has distinct channel properties separate from PKD2 or TRPC1 homomers alone. Interacts with TMEM120A; TMEM120A inhibits PKD2 channel activity through the physical association of PKD2 with TMEM120A. Interacts (via N-terminus) with RYR2; regulates RYR2 channel activity. Phosphorylated. Phosphorylation is important for protein function; a mutant that lacks the N-terminal phosphorylation sites cannot complement a zebrafish pkd2-deficient mutant. PKD-mediated phosphorylation at the C-terminus regulates its function in the release of Ca(2+) stores from the endoplasmic reticulum. Phosphorylation at Ser-812 regulates PKD2 trafficking. Phosphorylation at Ser-76 is required for PKD2 trafficking to or retention at the lateral plasma membrane. Phosphorylation at Ser-801, Ser-812 and Ser-829 regulates PKD2 channel activity. Post-translationally, N-glycosylated. The four subunits in a tetramer probably differ in the extent of glycosylation; simultaneous glycosylation of all experimentally validated sites would probably create steric hindrance. Thus, glycosylation at Asn-305 is not compatible with glycosylation at Asn-328; only one of these two residues is glycosylated at a given time. In terms of processing, sumoylated by SUMO1; sumoylation regulates PKD2 membrane recycling and is necessary for intravascular pressure-induced arterial contractility. As to expression, detected in fetal and adult kidney. Detected at the thick ascending limb of the loop of Henle, at distal tubules, including the distal convoluted tubule and cortical collecting tubules, with weak staining of the collecting duct. Detected on placenta syncytiotrophoblasts (at protein level). Strongly expressed in ovary, fetal and adult kidney, testis, and small intestine. Not detected in peripheral leukocytes.

It is found in the cell projection. Its subcellular location is the cilium membrane. It localises to the endoplasmic reticulum membrane. The protein resides in the cell membrane. The protein localises to the basolateral cell membrane. It is found in the cytoplasmic vesicle membrane. Its subcellular location is the golgi apparatus. It localises to the vesicle. The protein resides in the secreted. The protein localises to the extracellular exosome. The enzyme catalyses K(+)(in) = K(+)(out). It catalyses the reaction Na(+)(in) = Na(+)(out). The catalysed reaction is Ca(2+)(in) = Ca(2+)(out). Channel activity is regulated by phosphorylation. Channel activity is regulated by intracellular Ca(2+). At the endoplasmic reticulum membrane (ER), TMEM33 enhances its channel activity. TMEM120A inhibits the channel activity of PKD2, and mediates mechanosensitivity of the PKD2-TMEM120A channel complex. PKD1/PKD2 complex on the plasma membrane is activated by PKD1 N-terminus. In terms of biological role, forms a nonselective cation channel. Can function as a homotetrameric ion channel or can form heteromer with PKD1. Displays distinct function depending on its subcellular localization and regulation by its binding partners. In primary cilium functions as a cation channel, with a preference for monovalent cations over divalent cations that allows K(+), Na(+) and Ca(2+) influx, with low selectivity for Ca(2+). Involved in fluid-flow mechanosensation by the primary cilium in renal epithelium. In the endoplasmic reticulum, likely functions as a K(+) channel to facilitate Ca(2+) release. The heterotetrameric PKD1/PKD2 channel has higher Ca(2+) permeability than homomeric PKD2 channel and acts as a primarily Ca(2+)-permeable channel. Interacts with and acts as a regulator of a number of other channels, such as TRPV4, TRPC1, IP3R, RYR2, ultimately further affecting intracellular signaling, to modulate intracellular Ca(2+) signaling. Together with TRPV4, forms mechano- and thermosensitive channels in cilium. In cardiomyocytes, PKD2 modulates Ca(2+) release from stimulated RYR2 receptors through direct association. Also involved in left-right axis specification via its role in sensing nodal flow; forms a complex with PKD1L1 in cilia to facilitate flow detection in left-right patterning. Acts as a regulator of cilium length together with PKD1. Mediates systemic blood pressure and contributes to the myogenic response in cerebral arteries though vasoconstriction. This Homo sapiens (Human) protein is Polycystin-2.